The primary structure comprises 323 residues: Fructose-1,6-bisphosphatase class 1 (323 aa).

Residues Glu-88, Asp-107, Leu-109, and Asp-110 each contribute to the Mg(2+) site. Residues Asp-110–Ser-113 and Asn-200 each bind substrate. Mg(2+) is bound at residue Glu-272.

The protein belongs to the FBPase class 1 family. As to quaternary structure, homotetramer. Mg(2+) serves as cofactor.

It localises to the cytoplasm. The catalysed reaction is beta-D-fructose 1,6-bisphosphate + H2O = beta-D-fructose 6-phosphate + phosphate. Its pathway is carbohydrate biosynthesis; gluconeogenesis. The protein is Fructose-1,6-bisphosphatase class 1 of Acinetobacter baumannii (strain ACICU).